We begin with the raw amino-acid sequence, 430 residues long: Target of rapamycin complex 1 subunit toc1 (430 aa).

Residues Ser204 and Ser399 each carry the phosphoserine modification.

As to quaternary structure, the target of rapamycin complex 1 (TORC1) is composed of at least mip1, pop3/wat1, tco89, toc1 and tor2.

The protein resides in the cytoplasm. Functionally, component of TORC1, which regulates multiple cellular processes to control cell growth in response to environmental signals. Tor2 is essential for growth. Nutrient limitation and environmental stress signals cause inactivation of TORC1. Active TORC1 positively controls cell growth and ribosome biogenesis by regulating ribosomal protein gene expression. TORC1 negatively controls G1 cell-cycle arrest, sexual development and amino acid uptake. Represses mating, meiosis and sporulation efficiency by interfering with the functions of the transcription factor ste11 and the meiosis-promoting RNA-binding protein mei2. This is Target of rapamycin complex 1 subunit toc1 from Schizosaccharomyces pombe (strain 972 / ATCC 24843) (Fission yeast).